A 129-amino-acid chain; its full sequence is uncharacterized protein (129 aa).

Basic residues predominate over residues 84-98; that stretch reads QKTVSKKYKSRKGRR. Residues 84-129 are disordered; that stretch reads QKTVSKKYKSRKGRRYTRERNISSEKNKTDKSHKVRVGKIQNINND. Residues 99-115 show a composition bias toward basic and acidic residues; the sequence is YTRERNISSEKNKTDKS.

This is an uncharacterized protein from Acanthamoeba polyphaga mimivirus (APMV).